The sequence spans 251 residues: tRNA-cytidine(32) 2-sulfurtransferase 1 (251 aa).

The PP-loop motif signature appears at 33 to 38; it reads SGGKDS. [4Fe-4S] cluster-binding residues include cysteine 108, cysteine 111, and cysteine 199.

It belongs to the TtcA family. As to quaternary structure, homodimer. Requires Mg(2+) as cofactor. It depends on [4Fe-4S] cluster as a cofactor.

Its subcellular location is the cytoplasm. It catalyses the reaction cytidine(32) in tRNA + S-sulfanyl-L-cysteinyl-[cysteine desulfurase] + AH2 + ATP = 2-thiocytidine(32) in tRNA + L-cysteinyl-[cysteine desulfurase] + A + AMP + diphosphate + H(+). The protein operates within tRNA modification. Catalyzes the ATP-dependent 2-thiolation of cytidine in position 32 of tRNA, to form 2-thiocytidine (s(2)C32). The sulfur atoms are provided by the cysteine/cysteine desulfurase (IscS) system. The sequence is that of tRNA-cytidine(32) 2-sulfurtransferase 1 from Francisella tularensis subsp. holarctica (strain FTNF002-00 / FTA).